The sequence spans 199 residues: MLPYPPSIRNAISHLSRLPGIGQKTAERLAMHLLHVPDRAVHELARSLVDLKKNTRMCSVCFTLSDTPVCAICGDPDRNASLLCVVEGPTEVMAIEKTAAFKGVYHVLHGVLSPMDGIGPDDIRIRELVDRVKKGIVKEIVLATDTRVEGEATAAYLVEVLKPFPVTVTRIASGMPAGGEVRYSDPVTLKNAMEKRYAL.

The C4-type zinc finger occupies Cys-58 to Cys-73. Residues Ser-81–Pro-176 form the Toprim domain.

Belongs to the RecR family.

May play a role in DNA repair. It seems to be involved in an RecBC-independent recombinational process of DNA repair. It may act with RecF and RecO. The sequence is that of Recombination protein RecR from Desulfosudis oleivorans (strain DSM 6200 / JCM 39069 / Hxd3) (Desulfococcus oleovorans).